The sequence spans 695 residues: Electrogenic aspartate/glutamate antiporter Aralar, mitochondrial (695 aa).

The N-terminal domain stretch occupies residues 1–310 (MPMHIPFPFN…DYSDLSNIAP (310 aa)). The Mitochondrial intermembrane portion of the chain corresponds to 2 to 345 (PMHIPFPFNW…FIQVLESSYR (344 aa)). EF-hand domains lie at 71–104 (FNDE…GLLC), 105–140 (TPDA…TELH), 142–175 (KIPF…LLHD), and 176–211 (FHEE…VKRH). Residues D84, S86, D88, L90, E95, D118, N122, T124, and D129 each coordinate Ca(2+). Positions 189, 193, and 200 each coordinate Ca(2+). The linker loop domain stretch occupies residues 311–327 (EHYTKHMTHRLAEIKAV). Residues 336 to 627 (FIQVLESSYR…RLFYVDFGGT (292 aa)) form a carrier domain region. Solcar repeat units lie at residues 340 to 431 (LESS…VRDK), 439 to 523 (IPTW…TKAM), and 531 to 619 (NHPL…LQRL). The helical transmembrane segment at 346–363 (FTLGSFAGAVGATVVYPI) threads the bilayer. The Mitochondrial matrix portion of the chain corresponds to 364-405 (DLVKTRMQNQRAGSYIGEVAYRNSWDCFKKVVRHEGFMGLYR). The helical transmembrane segment at 406–425 (GLLPQLMGVAPEKAIKLTVN) threads the bilayer. Residues 426-448 (DLVRDKLTDKKGNIPTWAEVLAG) are Mitochondrial intermembrane-facing. The helical transmembrane segment at 449-462 (GCAGASQVVFTNPL) threads the bilayer. At 463-497 (EIVKIRLQVAGEIASGSKIRAWSVVRELGLFGLYK) the chain is on the mitochondrial matrix side. A helical membrane pass occupies residues 498 to 517 (GARACLLRDVPFSAIYFPTY). Over 518–536 (AHTKAMMADKDGYNHPLTL) the chain is Mitochondrial intermembrane. Residues 537–554 (LAAGAIAGVPAASLVTPA) form a helical membrane-spanning segment. At 555 to 593 (DVIKTRLQVVARSGQTTYTGVWDATKKIMAEEGPRAFWK) the chain is on the mitochondrial matrix side. The chain crosses the membrane as a helical span at residues 594 to 613 (GTAARVFRSSPQFGVTLVTY). Topologically, residues 614–695 (ELLQRLFYVD…AASPSTATGS (82 aa)) are mitochondrial intermembrane. Residues 628-695 (QPKGSEAHKI…AASPSTATGS (68 aa)) form a C-terminal domain region.

Belongs to the mitochondrial carrier (TC 2.A.29) family. As to quaternary structure, homodimer (via N-terminus). It depends on Ca(2+) as a cofactor. Expressed throughout the body in both males and females, including in ovaries and testes. In terms of tissue distribution, specifically expressed in female ovaries. As to expression, expressed throughout the body in both males and females but absent from ovaries and testes.

The protein resides in the mitochondrion inner membrane. The catalysed reaction is L-aspartate(in) + L-glutamate(out) + H(+)(out) = L-aspartate(out) + L-glutamate(in) + H(+)(in). It carries out the reaction 3-sulfino-L-alanine(out) + L-glutamate(in) + H(+)(in) = 3-sulfino-L-alanine(in) + L-glutamate(out) + H(+)(out). It catalyses the reaction L-2-aminoadipate(in) + L-glutamate(out) + H(+)(out) = L-2-aminoadipate(out) + L-glutamate(in) + H(+)(in). The enzyme catalyses L-glutamine(in) + L-glutamate(out) + Na(+)(out) + H(+)(out) = L-glutamine(out) + L-glutamate(in) + Na(+)(in) + H(+)(in). Activated by Ca(2+). Inhibited by p-chloromercuribenzoate, pyrocarbonate, mersalyl, tannic acid and N-ethylmaleimide. In terms of biological role, mitochondrial electrogenic aspartate/glutamate antiporter that favors efflux of aspartate and entry of glutamate and proton within the mitochondria as part of the malate-aspartate shuttle. Also mediates the exchange of L-cysteinesulfinate (3-sulfino-L-alanine) for L-glutamate. Necessary for gamma-aminobutyric acid (GABA) uptake in brain mitochondria in response to increased mitochondrial membrane polarization; does not possess detectable GABA transport activity but role may be indirect. Possesses transport activity towards L-aspartate, L-glutamate and L-cysteinesulfinate (3-sulfino-L-alanine). L-glutamine transport activity is undetectable. GABA transport activity is undetectable. Functionally, possesses transport activity towards L-aspartate, L-glutamate and L-cysteinesulfinate (3-sulfino-L-alanine). Has a wider substrate specificity range that includes L-2-aminoadipate and L-glutamine. GABA transport activity is undetectable. In Drosophila melanogaster (Fruit fly), this protein is Electrogenic aspartate/glutamate antiporter Aralar, mitochondrial.